A 310-amino-acid chain; its full sequence is UPF0324 membrane protein GSU2818 (310 aa).

9 helical membrane-spanning segments follow: residues 11–33 (FTIL…VMGI), 53–72 (MLLQ…GEVI), 79–97 (IWYS…YGLG), 107–129 (SALI…APVL), 136–158 (TAVA…PLVG), 193–215 (ALAI…VMAA), 227–244 (IPLF…RTLL), 254–273 (LAGV…GAGL), and 286–308 (LVQA…KLPW).

Belongs to the UPF0324 family.

The protein localises to the cell membrane. This chain is UPF0324 membrane protein GSU2818, found in Geobacter sulfurreducens (strain ATCC 51573 / DSM 12127 / PCA).